We begin with the raw amino-acid sequence, 481 residues long: Acetyltransferase peniE (481 aa).

Catalysis depends on proton acceptor residues His-164 and Asp-411.

It belongs to the plant acyltransferase family. Monomer.

Acetyltransferase; part of the gene cluster that mediates the biosynthesis of penifulvin A, a potent insecticidal sesquiterpene that features a [5.5.5.6]dioxafenestrane ring. The first step of the pathway is performed by the sesquiterpene cyclase peniA that generates the angular triquinane scaffold silphinene via cyclization of the linear farnesyl pyrophosphate (FPP). The cytochrome P450 monooxygenase peniB and the flavin-dependent monooxygenase peniC then catalyze a series of oxidation reactions to transform silphinene into penifulvin A. The dioxygenases peniD and peniF, as well as the acetyltransferase peniE, do not seem to be involved in the biosynthesis of penifulvin A. In Penicillium patulum (Penicillium griseofulvum), this protein is Acetyltransferase peniE.